The sequence spans 471 residues: Alpha-galactosidase 5 (471 aa).

The N-terminal stretch at 1 to 18 (MFAFYFLTACTTLKGVFG) is a signal peptide. A disulfide bond links Cys-42 and Cys-74. Substrate-binding residues include Asp-72 and Asp-73. N-linked (GlcNAc...) asparagine glycosylation occurs at Asn-105. A disulfide bridge links Cys-121 with Cys-151. Lys-147 serves as a coordination point for substrate. Asp-149 acts as the Nucleophile in catalysis. An N-linked (GlcNAc...) asparagine glycan is attached at Asn-175. Arg-205 provides a ligand contact to substrate. The Proton donor role is filled by Asp-209. 2 disulfides stabilise this stretch: Cys-221-Cys-237 and Cys-223-Cys-230. Gln-251 contacts substrate. N-linked (GlcNAc...) asparagine glycosylation is found at Asn-270, Asn-370, Asn-403, Asn-422, Asn-435, and Asn-454.

The protein belongs to the glycosyl hydrolase 27 family. In terms of assembly, homotetramer.

The protein localises to the secreted. The enzyme catalyses Hydrolysis of terminal, non-reducing alpha-D-galactose residues in alpha-D-galactosides, including galactose oligosaccharides, galactomannans and galactolipids.. In Saccharomyces cerevisiae (Baker's yeast), this protein is Alpha-galactosidase 5 (MEL5).